Consider the following 85-residue polypeptide: U4-theraphotoxin-Hhn1j (85 aa).

Positions 1-22 (MKVTLIAILTCAAVLVLHTTAA) are cleaved as a signal peptide. The propeptide occupies 23 to 48 (EELEAESQLMEVGMPDTELAAVDEER). 3 disulfide bridges follow: Cys-52–Cys-66, Cys-56–Cys-77, and Cys-71–Cys-82.

Belongs to the neurotoxin 12 (Hwtx-2) family. 02 (Hwtx-2) subfamily. As to expression, expressed by the venom gland.

The protein resides in the secreted. In terms of biological role, postsynaptic neurotoxin. This chain is U4-theraphotoxin-Hhn1j, found in Cyriopagopus hainanus (Chinese bird spider).